The primary structure comprises 547 residues: MVKKHQNSKMGNTNHFGHLKSFVGGNVVALGAGTPYLFSFYAPQLLSKCHIPVSASSKLSFSLTIGSSLMGILAGIVVDRSPKLSCLIGSMCVFIAYLILNLCYKHEWSSTFLISLSLVLIGYGSVSGFYASVKCANTNFPQHRGTAGAFPVSLYGLSGMVFSYLCSKLFGENIEHVFIFLMVACGCMILVGYFSLDIFSNAEGDDASIKEWELQKSRETDDNIVPLYENSNDYIGSPVRSSSPATYETYALSDNFQETSEFFALEDRQLSNRPLLSPSSPHTKYDFEDENTSKNTVGENSAQKSMRLHVFQSLKSSTFIGYYIVLGILQGVGLMYIYSVGFMVQAQVSTPPLNQLPINAEKIQSLQVTLLSLLSFCGRLSSGPISDFLVKKFKAQRLWNIVIASLLVFLASNKISHDFSSIEDPSLRASKSFKNISVCSAIFGYSFGVLFGTFPSIVADRFGTNGYSTLWGVLTTGGVFSVSVFTDILGRDFKANTGDDDGNCKKGVLCYSYTFMVTKYCAAFNLLFVLGIIGYTYYRRRATANSL.

At 1–21 (MVKKHQNSKMGNTNHFGHLKS) the chain is on the extracellular side. A helical membrane pass occupies residues 22–42 (FVGGNVVALGAGTPYLFSFYA). Topologically, residues 43 to 58 (PQLLSKCHIPVSASSK) are cytoplasmic. The helical transmembrane segment at 59 to 79 (LSFSLTIGSSLMGILAGIVVD) threads the bilayer. Residues 80-83 (RSPK) lie on the Extracellular side of the membrane. Residues 84-104 (LSCLIGSMCVFIAYLILNLCY) traverse the membrane as a helical segment. The Cytoplasmic segment spans residues 105–110 (KHEWSS). The chain crosses the membrane as a helical span at residues 111–131 (TFLISLSLVLIGYGSVSGFYA). The Extracellular segment spans residues 132–144 (SVKCANTNFPQHR). Residues 145-165 (GTAGAFPVSLYGLSGMVFSYL) traverse the membrane as a helical segment. Residues 166–175 (CSKLFGENIE) lie on the Cytoplasmic side of the membrane. The helical transmembrane segment at 176–196 (HVFIFLMVACGCMILVGYFSL) threads the bilayer. At 197–323 (DIFSNAEGDD…LKSSTFIGYY (127 aa)) the chain is on the extracellular side. Phosphoserine is present on Ser-237. A disordered region spans residues 275-300 (LLSPSSPHTKYDFEDENTSKNTVGEN). A helical transmembrane segment spans residues 324 to 344 (IVLGILQGVGLMYIYSVGFMV). Over 345-398 (QAQVSTPPLNQLPINAEKIQSLQVTLLSLLSFCGRLSSGPISDFLVKKFKAQRL) the chain is Cytoplasmic. The chain crosses the membrane as a helical span at residues 399–419 (WNIVIASLLVFLASNKISHDF). Over 420–437 (SSIEDPSLRASKSFKNIS) the chain is Extracellular. The chain crosses the membrane as a helical span at residues 438 to 458 (VCSAIFGYSFGVLFGTFPSIV). Residues 459 to 469 (ADRFGTNGYST) lie on the Cytoplasmic side of the membrane. A helical membrane pass occupies residues 470–490 (LWGVLTTGGVFSVSVFTDILG). Residues 491-514 (RDFKANTGDDDGNCKKGVLCYSYT) are Extracellular-facing. A helical transmembrane segment spans residues 515-535 (FMVTKYCAAFNLLFVLGIIGY). The Cytoplasmic portion of the chain corresponds to 536 to 547 (TYYRRRATANSL).

It localises to the membrane. This is an uncharacterized protein from Saccharomyces cerevisiae (strain ATCC 204508 / S288c) (Baker's yeast).